The sequence spans 373 residues: Probable tRNA sulfurtransferase (373 aa).

Residues 54 to 158 (NKNIEELSKV…NDVAYFYHKI (105 aa)) enclose the THUMP domain. ATP-binding positions include 176–177 (LF), 201–202 (NF), lysine 256, glycine 278, and glutamine 287.

The protein belongs to the ThiI family.

The protein localises to the cytoplasm. The catalysed reaction is [ThiI sulfur-carrier protein]-S-sulfanyl-L-cysteine + a uridine in tRNA + 2 reduced [2Fe-2S]-[ferredoxin] + ATP + H(+) = [ThiI sulfur-carrier protein]-L-cysteine + a 4-thiouridine in tRNA + 2 oxidized [2Fe-2S]-[ferredoxin] + AMP + diphosphate. It catalyses the reaction [ThiS sulfur-carrier protein]-C-terminal Gly-Gly-AMP + S-sulfanyl-L-cysteinyl-[cysteine desulfurase] + AH2 = [ThiS sulfur-carrier protein]-C-terminal-Gly-aminoethanethioate + L-cysteinyl-[cysteine desulfurase] + A + AMP + 2 H(+). The protein operates within cofactor biosynthesis; thiamine diphosphate biosynthesis. Functionally, catalyzes the ATP-dependent transfer of a sulfur to tRNA to produce 4-thiouridine in position 8 of tRNAs, which functions as a near-UV photosensor. Also catalyzes the transfer of sulfur to the sulfur carrier protein ThiS, forming ThiS-thiocarboxylate. This is a step in the synthesis of thiazole, in the thiamine biosynthesis pathway. The sulfur is donated as persulfide by IscS. This is Probable tRNA sulfurtransferase from Saccharolobus islandicus (strain M.16.4 / Kamchatka #3) (Sulfolobus islandicus).